The following is a 163-amino-acid chain: 3-isopropylmalate dehydratase small subunit (163 aa).

This sequence belongs to the LeuD family. LeuD type 2 subfamily. In terms of assembly, heterodimer of LeuC and LeuD.

It carries out the reaction (2R,3S)-3-isopropylmalate = (2S)-2-isopropylmalate. Its pathway is amino-acid biosynthesis; L-leucine biosynthesis; L-leucine from 3-methyl-2-oxobutanoate: step 2/4. Its function is as follows. Catalyzes the isomerization between 2-isopropylmalate and 3-isopropylmalate, via the formation of 2-isopropylmaleate. The polypeptide is 3-isopropylmalate dehydratase small subunit (Thermococcus kodakarensis (strain ATCC BAA-918 / JCM 12380 / KOD1) (Pyrococcus kodakaraensis (strain KOD1))).